A 265-amino-acid chain; its full sequence is Apolipoprotein A-I (265 aa).

The N-terminal stretch at 1-20 (METKAVVLTLAVLFLTGSQA) is a signal peptide. A run of 2 repeats spans residues 69–90 (LKIL…EQMR) and 91–112 (PIFQ…EVLN). Residues 69 to 265 (LKILDNWDTL…DEATKKLNSQ (197 aa)) form a 10 X approximate tandem repeats region. The stretch at 113–123 (KDLEELKQKVQ) is one 3; half-length repeat. A run of 5 repeats spans residues 124-145 (PYLD…QKMA), 146-167 (PLGT…EKLG), 168-189 (PLGE…TQLA), 190-209 (PYTE…LKES), and 210-230 (NLAE…ENAK). M195 is subject to Methionine sulfoxide. The stretch at 231–241 (PALEDFRQGLM) is one 9; half-length repeat. M241 carries the post-translational modification Methionine sulfoxide. Residues 242–265 (PVLEGFQKSVLAALDEATKKLNSQ) form repeat 10.

This sequence belongs to the apolipoprotein A1/A4/E family. In terms of assembly, homodimer. Interacts with APOA1BP and CLU. Component of a sperm activating protein complex (SPAP), consisting of APOA1, an immunoglobulin heavy chain, an immunoglobulin light chain and albumin. Interacts with NDRG1. Interacts with SCGB3A2. Interacts with NAXE and YJEFN3. In terms of processing, glycosylated. Palmitoylated. Post-translationally, phosphorylation sites are present in the extracellular medium. In terms of tissue distribution, major protein of plasma HDL, also found in chylomicrons.

Its subcellular location is the secreted. In terms of biological role, participates in the reverse transport of cholesterol from tissues to the liver for excretion by promoting cholesterol efflux from tissues and by acting as a cofactor for the lecithin cholesterol acyltransferase (LCAT). As part of the SPAP complex, activates spermatozoa motility. This Orycteropus afer (Aardvark) protein is Apolipoprotein A-I (APOA1).